The sequence spans 487 residues: MKPGSLTLRLSLLFVVAVAAVLIIVGVAFNELSRHHFRALDAQALGEKLEAITQIAKESGANPELLKARWHTLLGAHPDLSAVFLKTDGTPFFAEPPQSAVPSLAQATQRDGVWEWEKEGRMFRALTASVSLPTASPPLTAWLVLDVTTHMHFFAMLERWFWGVLLASTVLSAALGWLVAKNGLRPVARVTQTAASMSAGSLKERIPLEPVPDELRALITAFNSMLGRLDDSFMRLSNFSADIAHELRTPISNLRTHTEVILAKKRAPEVYEENLSSNLEELNRLSGIIDGMLFLAKSDNGLIVPEAVELDLRTVISKLFGYYEFLAEDKGIQLQASGNASIFADSVMIDRVVSNLLSNALRYTSSGETIKVSIHDHGGRVELRLENPGPEIVPQHLDRIFDRFYRVDPARREGRECGAGASDCPVLDASAWRHYLVYIPRGPNDLHPHLHAIACPTNLTCRPDSLGTAKPGHTRLGEHETGCHCAG.

Topologically, residues 1–9 are periplasmic; sequence MKPGSLTLR. A helical membrane pass occupies residues 10-30; it reads LSLLFVVAVAAVLIIVGVAFN. Over 31–136 the chain is Cytoplasmic; the sequence is ELSRHHFRAL…TASVSLPTAS (106 aa). A helical transmembrane segment spans residues 137 to 157; that stretch reads PPLTAWLVLDVTTHMHFFAML. Residues 158–159 lie on the Periplasmic side of the membrane; the sequence is ER. The helical transmembrane segment at 160–180 threads the bilayer; that stretch reads WFWGVLLASTVLSAALGWLVA. An HAMP domain is found at 181-234; it reads KNGLRPVARVTQTAASMSAGSLKERIPLEPVPDELRALITAFNSMLGRLDDSFM. Over 181 to 487 the chain is Cytoplasmic; it reads KNGLRPVARV…EHETGCHCAG (307 aa). The Histidine kinase domain occupies 242 to 455; that stretch reads DIAHELRTPI…LHPHLHAIAC (214 aa). His-245 carries the phosphohistidine; by autocatalysis modification.

It is found in the cell inner membrane. It carries out the reaction ATP + protein L-histidine = ADP + protein N-phospho-L-histidine.. Its function is as follows. Member of the two-component regulatory system CopS/CopR. Involved in the activation of copper resistance gene operon copABCD. Specifically recognizes or transduces a signal only in response to copper. This would lead to phosphorylation of CopR in the cytoplasm. CopS/CopR may also regulate chromosomally encoded genes. May also be involved in basic copper metabolism. The protein is Sensor protein CopS (copS) of Pseudomonas syringae pv. tomato.